Consider the following 443-residue polypeptide: Adenylate cyclase (443 aa).

A run of 6 helical transmembrane segments spans residues 47 to 69, 74 to 93, 98 to 120, 124 to 143, 148 to 167, and 180 to 202; these read VLTI…QLAT, WYIA…VPLL, GLVA…GWDV, AGAQ…LVGI, LAVG…EFLV, and SVSF…WFAL. Over 203-443 the chain is Cytoplasmic; that stretch reads RDTARAEAVM…RGAEPRTAGV (241 aa). The Guanylate cyclase domain maps to 251–378; the sequence is SVLFADIVGF…DAVNVASRME (128 aa). The Mg(2+) site is built by D256 and D300.

Belongs to the adenylyl cyclase class-4/guanylyl cyclase family. In terms of assembly, homodimer. Can also exist as monomer. It depends on Mg(2+) as a cofactor. Mn(2+) is required as a cofactor.

The protein resides in the cell membrane. The enzyme catalyses ATP = 3',5'-cyclic AMP + diphosphate. The chain is Adenylate cyclase (cya) from Mycobacterium bovis (strain ATCC BAA-935 / AF2122/97).